Consider the following 189-residue polypeptide: MRKSVIATGLALMMAVPFAANAADYVIDTKGAHASINFKVSHLGYSFIKGRFNTFSGDFSYDQNNIAASKVNVVVDTRSLDSNHAERDKHIRSGDFIDAGKFNTATFTSTKVMDKGDGKLDVMGDLTLHGVTKPITIAAEFVGAGQDPWGGQRAGFIGTTRLELADFNIPVMGTSSYVDMELHVEGIKK.

An N-terminal signal peptide occupies residues 1 to 22 (MRKSVIATGLALMMAVPFAANA).

Belongs to the UPF0312 family. Type 1 subfamily.

The protein resides in the periplasm. The protein is UPF0312 protein VV2_0231 of Vibrio vulnificus (strain CMCP6).